A 313-amino-acid chain; its full sequence is NADH-ubiquinone oxidoreductase chain 1 (313 aa).

The next 8 helical transmembrane spans lie at 7 to 27, 73 to 93, 104 to 124, 150 to 170, 175 to 195, 226 to 246, 250 to 270, and 293 to 313; these read LIGS…LTLL, IFYY…WMSM, LGVL…MVAG, LALI…LNFF, YMWF…SCLA, LIFL…SVIF, DIYS…FIWV, and MSLN…SMLF.

It belongs to the complex I subunit 1 family.

It localises to the mitochondrion inner membrane. It carries out the reaction a ubiquinone + NADH + 5 H(+)(in) = a ubiquinol + NAD(+) + 4 H(+)(out). Core subunit of the mitochondrial membrane respiratory chain NADH dehydrogenase (Complex I) that is believed to belong to the minimal assembly required for catalysis. Complex I functions in the transfer of electrons from NADH to the respiratory chain. The immediate electron acceptor for the enzyme is believed to be ubiquinone. The polypeptide is NADH-ubiquinone oxidoreductase chain 1 (Aedes aegypti (Yellowfever mosquito)).